The chain runs to 145 residues: Actin-depolymerizing factor 2 (145 aa).

An ADF-H domain is found at 13–145 (GMGVAPDIRD…DLEVLRERAH (133 aa)).

It belongs to the actin-binding proteins ADF family.

Actin-depolymerizing protein. Severs actin filaments (F-actin) and binds to actin monomers. The chain is Actin-depolymerizing factor 2 (ADF2) from Oryza sativa subsp. japonica (Rice).